A 639-amino-acid polypeptide reads, in one-letter code: Serine/threonine-protein kinase PAK mbt (639 aa).

The 14-residue stretch at 11-24 (ISMPSNFEHRVHTG) folds into the CRIB domain. Positions 25–367 (FDKRENKYVG…VVSAGDPREN (343 aa)) are linker. 2 disordered regions span residues 79 to 195 (HHNN…SLLY) and 222 to 345 (RSNL…QDQR). Low complexity-rich tracts occupy residues 91 to 129 (NSSSTMMMGSMAPMNPMAPGAHPMMSHGPGMMMPPETGG), 138 to 159 (VARSNSLRSSSPPRVRRVANVP), 227 to 241 (PPSGGSMPQQQQTSP), and 274 to 295 (QQQQQQQQQAKQGGDQNQNPLH). The span at 296–308 (PHAHPHPHHHQHL) shows a compositional bias: basic residues. Positions 309–331 (AKSASRASSSSGGASSAAQQASG) are enriched in low complexity. One can recognise a Protein kinase domain in the interval 368-619 (LDHFNKIGEG…AAELLAHPFL (252 aa)). ATP-binding positions include 374 to 382 (IGEGSTGTV) and Lys397. Residue Asp487 is the Proton acceptor of the active site. The residue at position 521 (Ser521) is a Phosphoserine. At Thr525 the chain carries Phosphothreonine.

Belongs to the protein kinase superfamily. STE Ser/Thr protein kinase family. STE20 subfamily. As to quaternary structure, interacts tightly with GTP-bound but not GDP-bound Cdc42 and weakly with Rac1. Requires Mg(2+) as cofactor. Autophosphorylated when activated by Cdc42. As to expression, expressed in adult brain and eye. High levels detected in developing photoreceptor cells and future bristle cells, and lower levels in cone and pigment cells, as detected in third instar eye imaginal disks (at protein level).

The protein localises to the cell junction. Its subcellular location is the adherens junction. It localises to the cell membrane. It carries out the reaction L-seryl-[protein] + ATP = O-phospho-L-seryl-[protein] + ADP + H(+). The catalysed reaction is L-threonyl-[protein] + ATP = O-phospho-L-threonyl-[protein] + ADP + H(+). In terms of biological role, involved in neurogenesis of the adult central nervous system, and together with Cdc42, regulates photoreceptor cell morphogenesis. Phosphorylates exogenous substrates when activated by Cdc42. This chain is Serine/threonine-protein kinase PAK mbt, found in Drosophila melanogaster (Fruit fly).